Here is a 59-residue protein sequence, read N- to C-terminus: Potassium channel toxin alpha-KTx 16.7 (59 aa).

The N-terminal stretch at M1–A22 is a signal peptide. 3 disulfide bridges follow: C30–C51, C36–C56, and C40–C58.

This sequence belongs to the short scorpion toxin superfamily. Potassium channel inhibitor family. Alpha-KTx 16 subfamily. As to expression, expressed by the venom gland.

It localises to the secreted. In terms of biological role, may play a role in blocking voltage-gated potassium channels Kv1.2/KCNA2, and Kv1.3/KCNA3. Blocks the voltage-gated potassium channel Kv1.3/KCNA3, with an IC(50) of 118.3 +-55.8 nM. The sequence is that of Potassium channel toxin alpha-KTx 16.7 from Mesobuthus gibbosus (Mediterranean checkered scorpion).